The chain runs to 622 residues: Palmitoyltransferase pfa3 (622 aa).

The Cytoplasmic portion of the chain corresponds to 1-38 (MDATPYTTSSTSTALDSPSSLSATMARRWARKLERYCC). The chain crosses the membrane as a helical span at residues 39 to 59 (TCVTYFPLAFVYSMTSWAAYV). Residues 60–76 (DVSLSTTPSRVTWLGHS) are Vacuolar-facing. The helical transmembrane segment at 77-97 (YGFIAVVLYLLANWCYTYAVF) threads the bilayer. At 98 to 175 (TSPGSTTNEY…ATCVGLRNHK (78 aa)) the chain is on the cytoplasmic side. A DHHC domain is found at 132-182 (RFCKKCQARKPDRAHHCSTCRRCVLKMDHHCPWLATCVGLRNHKAFLLFLI). Residues 176 to 196 (AFLLFLIYTSVFCWVSFAGSA) traverse the membrane as a helical segment. At 197 to 217 (SWVWEEIMSNTTYVETLMPVN) the chain is on the vacuolar side. A helical membrane pass occupies residues 218–238 (YIMLSVISGIIGIVLSAFCGW). At 239 to 622 (HIYLASRGQT…EGRSNDDGVD (384 aa)) the chain is on the cytoplasmic side. Disordered regions lie at residues 298 to 334 (PGVT…ELQA), 419 to 507 (REEQ…YADD), and 533 to 622 (DDVL…DGVD). A compositionally biased stretch (basic and acidic residues) spans 302–311 (RPEEGEEMRR). A compositionally biased stretch (polar residues) spans 313-330 (TTPSGSSQRNDLASQHNP). Residues 419-428 (REEQRQRERQ) show a composition bias toward basic and acidic residues. Residues 443-455 (YTPTWTPPNQQHP) show a composition bias toward polar residues. The segment covering 466-488 (PSSQPQTQRNSNSSSPSFTPSRR) has biased composition (low complexity). Residues 533–547 (DDVLNDDDDDDEDYF) show a composition bias toward acidic residues. Basic and acidic residues predominate over residues 610-622 (NGEEGRSNDDGVD).

It belongs to the DHHC palmitoyltransferase family. PFA3 subfamily. In terms of processing, autopalmitoylated.

The protein resides in the vacuole membrane. The enzyme catalyses L-cysteinyl-[protein] + hexadecanoyl-CoA = S-hexadecanoyl-L-cysteinyl-[protein] + CoA. Palmitoyltransferase specific for vac8. Palmitoylates vac8 at one or more of its N-terminal cysteine residues, which is required for its proper membrane localization. The chain is Palmitoyltransferase pfa3 (ptr-3) from Neurospora crassa (strain ATCC 24698 / 74-OR23-1A / CBS 708.71 / DSM 1257 / FGSC 987).